The following is a 355-amino-acid chain: Guanine nucleotide-binding protein G(i) subunit alpha-2 (355 aa).

The N-myristoyl glycine moiety is linked to residue glycine 2. The S-palmitoyl cysteine moiety is linked to residue cysteine 3. The G-alpha domain occupies 32 to 355 (REVKLLLLGA…KNNLKDCGLF (324 aa)). The G1 motif stretch occupies residues 35–48 (KLLLLGAGESGKST). Residues 40 to 47 (GAGESGKS), 176 to 182 (LRTRVKT), 201 to 205 (DVGGQ), 270 to 273 (NKKD), and alanine 327 each bind GTP. Mg(2+) contacts are provided by serine 47 and threonine 182. Positions 174 to 182 (DVLRTRVKT) are G2 motif. Positions 197 to 206 (FKMFDVGGQR) are G3 motif. The tract at residues 266–273 (ILFLNKKD) is G4 motif. Positions 325–330 (TCATDT) are G5 motif.

It belongs to the G-alpha family. G(i/o/t/z) subfamily. G proteins are composed of 3 units; alpha, beta and gamma. The alpha chain contains the guanine nucleotide binding site. In this context, interacts with GNB2. Interacts with UNC5B. Interacts with GPSM1. Interacts with RGS12 and RGS14. Interacts (inactive GDP-bound form) with NUCB1 (via GBA motif); the interaction leads to activation of GNAI3. Interacts (inactive GDP-bound form) with CCDC88C/DAPLE (via GBA motif). Interacts (inactive GDP-bound form) with CCDC8A/GIV (via GBA motif). Interacts with CXCR1 and CXCR2.

Its subcellular location is the cytoplasm. It is found in the cytoskeleton. It localises to the microtubule organizing center. The protein resides in the centrosome. The protein localises to the cell membrane. Its subcellular location is the membrane. Its function is as follows. Guanine nucleotide-binding proteins (G proteins) are involved as modulators or transducers in various transmembrane signaling systems. The G(i) proteins are involved in hormonal regulation of adenylate cyclase: they inhibit the cyclase in response to beta-adrenergic stimuli. May play a role in cell division. The sequence is that of Guanine nucleotide-binding protein G(i) subunit alpha-2 (GNAI2) from Canis lupus familiaris (Dog).